We begin with the raw amino-acid sequence, 640 residues long: PTS system mannitol-specific EIICBA component (640 aa).

Residues 12–343 (LGRFLSAMIM…LKISNRNHYV (332 aa)) form the PTS EIIC type-2 domain. 6 consecutive transmembrane segments (helical) span residues 24-45 (ISVF…WCPN), 50-70 (KVLS…TGGY), 134-155 (SVGI…PMIE), 165-185 (VNLM…EPAK), 273-292 (LILG…GGLI), and 313-334 (VINL…CMLL). The 97-residue stretch at 379–475 (RNIIFACDAG…YLVENNLDNN (97 aa)) folds into the PTS EIIB type-2 domain. Catalysis depends on C385, which acts as the Phosphocysteine intermediate; for EIIB activity. C385 carries the post-translational modification Phosphocysteine; by EIIA. Positions 496-638 (FSLTKENIFL…DDVLYLFSRK (143 aa)) constitute a PTS EIIA type-2 domain. Catalysis depends on H556, which acts as the Tele-phosphohistidine intermediate; for EIIA activity. Residue H556 is modified to Phosphohistidine; by HPr.

Homodimer. Post-translationally, an intramolecular phosphotransfer takes places between His-556 and Cys-385.

It localises to the cell inner membrane. The enzyme catalyses D-mannitol(out) + N(pros)-phospho-L-histidyl-[protein] = D-mannitol 1-phosphate(in) + L-histidyl-[protein]. Functionally, the phosphoenolpyruvate-dependent sugar phosphotransferase system (sugar PTS), a major carbohydrate active transport system, catalyzes the phosphorylation of incoming sugar substrates concomitantly with their translocation across the cell membrane. This system is involved in D-mannitol transport. The protein is PTS system mannitol-specific EIICBA component (mtlA) of Buchnera aphidicola subsp. Baizongia pistaciae (strain Bp).